Consider the following 197-residue polypeptide: Ribonuclease HII (197 aa).

An RNase H type-2 domain is found at 9–197 (KLIAGVDEVG…APVKKALEQF (189 aa)). Residues Asp15, Glu16, and Asp107 each coordinate a divalent metal cation.

The protein belongs to the RNase HII family. Requires Mn(2+) as cofactor. Mg(2+) is required as a cofactor.

Its subcellular location is the cytoplasm. It carries out the reaction Endonucleolytic cleavage to 5'-phosphomonoester.. Its function is as follows. Endonuclease that specifically degrades the RNA of RNA-DNA hybrids. The sequence is that of Ribonuclease HII from Haemophilus influenzae (strain PittEE).